The sequence spans 540 residues: Chaperonin GroEL 1 (540 aa).

ATP is bound by residues 29–32 (TLGP), 86–90 (DGTTT), Gly-413, 477–479 (NAA), and Asp-493.

This sequence belongs to the chaperonin (HSP60) family. Forms a cylinder of 14 subunits composed of two heptameric rings stacked back-to-back. Interacts with the co-chaperonin GroES.

It is found in the cytoplasm. It catalyses the reaction ATP + H2O + a folded polypeptide = ADP + phosphate + an unfolded polypeptide.. Functionally, together with its co-chaperonin GroES, plays an essential role in assisting protein folding. The GroEL-GroES system forms a nano-cage that allows encapsulation of the non-native substrate proteins and provides a physical environment optimized to promote and accelerate protein folding. The polypeptide is Chaperonin GroEL 1 (Salinispora arenicola (strain CNS-205)).